Reading from the N-terminus, the 187-residue chain is Elongation factor P (187 aa).

Belongs to the elongation factor P family.

The protein resides in the cytoplasm. The protein operates within protein biosynthesis; polypeptide chain elongation. Functionally, involved in peptide bond synthesis. Stimulates efficient translation and peptide-bond synthesis on native or reconstituted 70S ribosomes in vitro. Probably functions indirectly by altering the affinity of the ribosome for aminoacyl-tRNA, thus increasing their reactivity as acceptors for peptidyl transferase. The protein is Elongation factor P of Corynebacterium glutamicum (strain R).